Reading from the N-terminus, the 52-residue chain is Conotoxin Cal6.36 (52 aa).

Residues 1–22 (MKVTCVLTLAVLILTVGQMVTA) form the signal peptide. 3 cysteine pairs are disulfide-bonded: Cys-24/Cys-39, Cys-31/Cys-43, and Cys-38/Cys-47.

As to expression, expressed by the venom duct.

Its subcellular location is the secreted. In terms of biological role, probable neurotoxin. The polypeptide is Conotoxin Cal6.36 (Californiconus californicus (California cone)).